A 767-amino-acid polypeptide reads, in one-letter code: DNA topoisomerase 1 (767 aa).

Positions 1 to 23 (MSGDHLHNDSQIEADFRLNDSHK) are enriched in basic and acidic residues. The tract at residues 1 to 201 (MSGDHLHNDS…NKKKKPKKEE (201 aa)) is disordered. Serine 2 is modified (N-acetylserine). Serine 2 and serine 10 each carry phosphoserine. Positions 24–39 (HKDKHKDREHRHKEHK) are enriched in basic residues. Over residues 40-110 (KDKEKDREKS…DAKIKKEKEN (71 aa)) the composition is skewed to basic and acidic residues. Position 59 is a phosphoserine (serine 59). Lysine 103 participates in a covalent cross-link: Glycyl lysine isopeptide (Lys-Gly) (interchain with G-Cter in SUMO2). Residue lysine 105 forms a Glycyl lysine isopeptide (Lys-Gly) (interchain with G-Cter in SUMO); alternate linkage. Residue lysine 105 forms a Glycyl lysine isopeptide (Lys-Gly) (interchain with G-Cter in SUMO2); alternate linkage. Serine 114 bears the Phosphoserine mark. A Glycyl lysine isopeptide (Lys-Gly) (interchain with G-Cter in SUMO); alternate cross-link involves residue lysine 119. A Glycyl lysine isopeptide (Lys-Gly) (interchain with G-Cter in SUMO2); alternate cross-link involves residue lysine 119. Residue lysine 119 forms a Glycyl lysine isopeptide (Lys-Gly) (interchain with G-Cter in SUMO1); alternate linkage. Residues 131–168 (PKEDIKPLKRPRDEDDADYKPKKIKTEDIKKEKKRKLE) are compositionally biased toward basic and acidic residues. Residues lysine 136 and lysine 150 each participate in a glycyl lysine isopeptide (Lys-Gly) (interchain with G-Cter in SUMO2) cross-link. Residue lysine 155 forms a Glycyl lysine isopeptide (Lys-Gly) (interchain with G-Cter in SUMO); alternate linkage. Lysine 155 is covalently cross-linked (Glycyl lysine isopeptide (Lys-Gly) (interchain with G-Cter in SUMO2); alternate). Glycyl lysine isopeptide (Lys-Gly) (interchain with G-Cter in SUMO2) cross-links involve residues lysine 160 and lysine 166. Lysine 174 is covalently cross-linked (Glycyl lysine isopeptide (Lys-Gly) (interchain with G-Cter in SUMO2); alternate). Lysine 174 is subject to N6-acetyllysine; alternate. Positions 181–201 (KDKDKKGAESDNKKKKPKKEE) are enriched in basic and acidic residues. Lysine 206 participates in a covalent cross-link: Glycyl lysine isopeptide (Lys-Gly) (interchain with G-Cter in SUMO2). Lysine 282 carries the N6-acetyllysine modification. A Glycyl lysine isopeptide (Lys-Gly) (interchain with G-Cter in SUMO2) cross-link involves residue lysine 338. 2 interaction with DNA regions span residues 427-428 (KY) and 490-495 (RAGNEK). The region spanning 434-767 (SSRIKGEKDW…IDMTDEDYEF (334 aa)) is the Topo IB-type catalytic domain. Position 508 is a phosphoserine; by CK2 (serine 508). Lysine 551 participates in a covalent cross-link: Glycyl lysine isopeptide (Lys-Gly) (interchain with G-Cter in SUMO2). Positions 587-589 (TAK) are interaction with DNA. Glycyl lysine isopeptide (Lys-Gly) (interchain with G-Cter in SUMO2) cross-links involve residues lysine 644, lysine 702, and lysine 714. Tyrosine 725 acts as the O-(3'-phospho-DNA)-tyrosine intermediate in catalysis.

This sequence belongs to the type IB topoisomerase family. As to quaternary structure, monomer. Interacts with ERCC6. Interacts with TPRN; TPRN interacts with a number of DNA damage response proteins, is recruited to sites of DNA damage and may play a role in DNA damage repair. Sumoylated. Lys-119 is the main site of sumoylation. Sumoylation plays a role in partitioning TOP1 between nucleoli and nucleoplasm. Levels are dramatically increased on camptothecin (CPT) treatment. Post-translationally, phosphorylation at Ser-508 by CK2 increases binding to supercoiled DNA and sensitivity to camptothecin.

Its subcellular location is the nucleus. It localises to the nucleolus. The protein localises to the nucleoplasm. It catalyses the reaction ATP-independent breakage of single-stranded DNA, followed by passage and rejoining.. With respect to regulation, specifically inhibited by camptothecin (CPT), a plant alkaloid with antitumor activity. Releases the supercoiling and torsional tension of DNA introduced during the DNA replication and transcription by transiently cleaving and rejoining one strand of the DNA duplex. Introduces a single-strand break via transesterification at a target site in duplex DNA. The scissile phosphodiester is attacked by the catalytic tyrosine of the enzyme, resulting in the formation of a DNA-(3'-phosphotyrosyl)-enzyme intermediate and the expulsion of a 5'-OH DNA strand. The free DNA strand then rotates around the intact phosphodiester bond on the opposing strand, thus removing DNA supercoils. Finally, in the religation step, the DNA 5'-OH attacks the covalent intermediate to expel the active-site tyrosine and restore the DNA phosphodiester backbone. Regulates the alternative splicing of tissue factor (F3) pre-mRNA in endothelial cells. Involved in the circadian transcription of the core circadian clock component BMAL1 by altering the chromatin structure around the ROR response elements (ROREs) on the BMAL1 promoter. The chain is DNA topoisomerase 1 (TOP1) from Cricetulus griseus (Chinese hamster).